The following is a 388-amino-acid chain: S-adenosylmethionine synthase (388 aa).

H16 provides a ligand contact to ATP. D18 is a Mg(2+) binding site. E44 contributes to the K(+) binding site. 2 residues coordinate L-methionine: E57 and Q100. The segment at 100–110 (QSPEIAQGVDR) is flexible loop. ATP is bound by residues 165-167 (DAK), D240, 246-247 (RK), A263, and K267. Residue D240 coordinates L-methionine. An L-methionine-binding site is contributed by K271.

It belongs to the AdoMet synthase family. As to quaternary structure, homotetramer; dimer of dimers. The cofactor is Mg(2+). K(+) is required as a cofactor.

The protein resides in the cytoplasm. The catalysed reaction is L-methionine + ATP + H2O = S-adenosyl-L-methionine + phosphate + diphosphate. Its pathway is amino-acid biosynthesis; S-adenosyl-L-methionine biosynthesis; S-adenosyl-L-methionine from L-methionine: step 1/1. Its function is as follows. Catalyzes the formation of S-adenosylmethionine (AdoMet) from methionine and ATP. The overall synthetic reaction is composed of two sequential steps, AdoMet formation and the subsequent tripolyphosphate hydrolysis which occurs prior to release of AdoMet from the enzyme. This Acinetobacter baumannii (strain AYE) protein is S-adenosylmethionine synthase.